Consider the following 152-residue polypeptide: Deoxyuridine 5'-triphosphate nucleotidohydrolase (152 aa).

Substrate contacts are provided by residues 71-73 (RSG), Asn-84, 88-90 (LID), and Met-98.

This sequence belongs to the dUTPase family. Mg(2+) is required as a cofactor.

It catalyses the reaction dUTP + H2O = dUMP + diphosphate + H(+). Its pathway is pyrimidine metabolism; dUMP biosynthesis; dUMP from dCTP (dUTP route): step 2/2. Functionally, this enzyme is involved in nucleotide metabolism: it produces dUMP, the immediate precursor of thymidine nucleotides and it decreases the intracellular concentration of dUTP so that uracil cannot be incorporated into DNA. The chain is Deoxyuridine 5'-triphosphate nucleotidohydrolase from Enterobacter sp. (strain 638).